Reading from the N-terminus, the 226-residue chain is Phosphatidylserine decarboxylase proenzyme (226 aa).

The active-site Schiff-base intermediate with substrate; via pyruvic acid is the Ser-184. Ser-184 bears the Pyruvic acid (Ser); by autocatalysis mark.

The protein belongs to the phosphatidylserine decarboxylase family. PSD-A subfamily. In terms of assembly, heterodimer of a large membrane-associated beta subunit and a small pyruvoyl-containing alpha subunit. Pyruvate is required as a cofactor. In terms of processing, is synthesized initially as an inactive proenzyme. Formation of the active enzyme involves a self-maturation process in which the active site pyruvoyl group is generated from an internal serine residue via an autocatalytic post-translational modification. Two non-identical subunits are generated from the proenzyme in this reaction, and the pyruvate is formed at the N-terminus of the alpha chain, which is derived from the carboxyl end of the proenzyme. The post-translation cleavage follows an unusual pathway, termed non-hydrolytic serinolysis, in which the side chain hydroxyl group of the serine supplies its oxygen atom to form the C-terminus of the beta chain, while the remainder of the serine residue undergoes an oxidative deamination to produce ammonia and the pyruvoyl prosthetic group on the alpha chain.

Its subcellular location is the cell membrane. The catalysed reaction is a 1,2-diacyl-sn-glycero-3-phospho-L-serine + H(+) = a 1,2-diacyl-sn-glycero-3-phosphoethanolamine + CO2. It functions in the pathway phospholipid metabolism; phosphatidylethanolamine biosynthesis; phosphatidylethanolamine from CDP-diacylglycerol: step 2/2. Its function is as follows. Catalyzes the formation of phosphatidylethanolamine (PtdEtn) from phosphatidylserine (PtdSer). This chain is Phosphatidylserine decarboxylase proenzyme, found in Ehrlichia chaffeensis (strain ATCC CRL-10679 / Arkansas).